The primary structure comprises 398 residues: 1-deoxy-D-xylulose 5-phosphate reductoisomerase (398 aa).

8 residues coordinate NADPH: Thr-10, Gly-11, Ser-12, Ile-13, Gly-36, Arg-37, Asn-38, and Asn-124. Lys-125 lines the 1-deoxy-D-xylulose 5-phosphate pocket. Glu-126 lines the NADPH pocket. Mn(2+) is bound at residue Asp-150. 1-deoxy-D-xylulose 5-phosphate-binding residues include Ser-151, Glu-152, Ser-186, and His-209. A Mn(2+)-binding site is contributed by Glu-152. Residue Gly-215 coordinates NADPH. 1-deoxy-D-xylulose 5-phosphate is bound by residues Ser-222, Asn-227, Lys-228, and Glu-231. A Mn(2+)-binding site is contributed by Glu-231.

The protein belongs to the DXR family. In terms of assembly, homodimer. Requires Mg(2+) as cofactor. The cofactor is Mn(2+).

It carries out the reaction 2-C-methyl-D-erythritol 4-phosphate + NADP(+) = 1-deoxy-D-xylulose 5-phosphate + NADPH + H(+). It participates in isoprenoid biosynthesis; isopentenyl diphosphate biosynthesis via DXP pathway; isopentenyl diphosphate from 1-deoxy-D-xylulose 5-phosphate: step 1/6. In terms of biological role, catalyzes the NADPH-dependent rearrangement and reduction of 1-deoxy-D-xylulose-5-phosphate (DXP) to 2-C-methyl-D-erythritol 4-phosphate (MEP). The sequence is that of 1-deoxy-D-xylulose 5-phosphate reductoisomerase from Yersinia pseudotuberculosis serotype IB (strain PB1/+).